Consider the following 257-residue polypeptide: Acetylglutamate kinase (257 aa).

Residues 43 to 44, Arg-65, and Asn-157 each bind substrate; that span reads GG. Residues 180–185 and 208–210 contribute to the ATP site; these read DVSGIL and IIT.

This sequence belongs to the acetylglutamate kinase family. ArgB subfamily. As to quaternary structure, homodimer.

Its subcellular location is the cytoplasm. The enzyme catalyses N-acetyl-L-glutamate + ATP = N-acetyl-L-glutamyl 5-phosphate + ADP. It functions in the pathway amino-acid biosynthesis; L-arginine biosynthesis; N(2)-acetyl-L-ornithine from L-glutamate: step 2/4. Catalyzes the ATP-dependent phosphorylation of N-acetyl-L-glutamate. The sequence is that of Acetylglutamate kinase from Klebsiella pneumoniae (strain 342).